The sequence spans 549 residues: Cytochrome c oxidase subunit 1 (549 aa).

The chain crosses the membrane as a helical span at residues 18-38 (LCYLLVAILSGFVGYVYSLFI). Residues glutamate 41 and glycine 46 each contribute to the Ca(2+) site. The helical transmembrane segment at 42-62 (LSLIGCGILFGDYQFYNVLIT) threads the bilayer. Residue histidine 64 participates in Fe(II)-heme a binding. Transmembrane regions (helical) follow at residues 66–86 (LIMV…NYFI), 100–120 (LNNM…NGFL), 148–168 (FVMF…INLL), 186–206 (LFIW…PVLA), and 222–242 (FYDV…WFFG). Position 243 (histidine 243) interacts with Cu cation. Positions 243-247 (HPEVY) form a cross-link, 1'-histidyl-3'-tyrosine (His-Tyr). The next 2 helical transmembrane spans lie at 246 to 266 (VYII…VIGF) and 269 to 289 (VFST…GMFV). Tyrosine 247 is an O2 binding site. The Cu cation site is built by histidine 292 and histidine 293. Transmembrane regions (helical) follow at residues 306 to 326 (YFGG…FNWI) and 340 to 360 (VYFV…GLFL). 2 residues coordinate Mg(2+): histidine 370 and aspartate 371. Histidine 378 contacts heme a3. A run of 5 helical transmembrane segments spans residues 379-399 (FHYV…IHFL), 402-422 (WLPI…LFIG), 460-480 (MLLL…FLFW), 484-504 (LFFV…STWL), and 520-540 (IVLD…IFFW). Fe(II)-heme a is bound at residue histidine 380.

This sequence belongs to the heme-copper respiratory oxidase family. As to quaternary structure, component of the cytochrome c oxidase (complex IV, CIV), a multisubunit enzyme composed of a catalytic core of 3 subunits and several supernumerary subunits. The complex exists as a monomer or a dimer and forms supercomplexes (SCs) in the inner mitochondrial membrane with ubiquinol-cytochrome c oxidoreductase (cytochrome b-c1 complex, complex III, CIII). Requires heme as cofactor. Cu cation serves as cofactor.

The protein localises to the mitochondrion inner membrane. The enzyme catalyses 4 Fe(II)-[cytochrome c] + O2 + 8 H(+)(in) = 4 Fe(III)-[cytochrome c] + 2 H2O + 4 H(+)(out). Its pathway is energy metabolism; oxidative phosphorylation. Component of the cytochrome c oxidase, the last enzyme in the mitochondrial electron transport chain which drives oxidative phosphorylation. The respiratory chain contains 3 multisubunit complexes succinate dehydrogenase (complex II, CII), ubiquinol-cytochrome c oxidoreductase (cytochrome b-c1 complex, complex III, CIII) and cytochrome c oxidase (complex IV, CIV), that cooperate to transfer electrons derived from NADH and succinate to molecular oxygen, creating an electrochemical gradient over the inner membrane that drives transmembrane transport and the ATP synthase. Cytochrome c oxidase is the component of the respiratory chain that catalyzes the reduction of oxygen to water. Electrons originating from reduced cytochrome c in the intermembrane space (IMS) are transferred via the dinuclear copper A center (CU(A)) of subunit 2 and heme A of subunit 1 to the active site in subunit 1, a binuclear center (BNC) formed by heme A3 and copper B (CU(B)). The BNC reduces molecular oxygen to 2 water molecules using 4 electrons from cytochrome c in the IMS and 4 protons from the mitochondrial matrix. This chain is Cytochrome c oxidase subunit 1 (COI), found in Leishmania tarentolae (Sauroleishmania tarentolae).